The following is a 559-amino-acid chain: Small ribosomal subunit protein bS1 (559 aa).

6 consecutive S1 motif domains span residues 21–87, 105–171, 192–260, 277–347, 364–434, and 451–520; these read GAII…LSRE, DEVV…VSRR, GQQV…LGLK, GTRV…LGIK, GDRI…LGIK, and GSIV…LSVK.

The protein belongs to the bacterial ribosomal protein bS1 family.

In terms of biological role, binds mRNA; thus facilitating recognition of the initiation point. It is needed to translate mRNA with a short Shine-Dalgarno (SD) purine-rich sequence. The sequence is that of Small ribosomal subunit protein bS1 (rpsA) from Pseudomonas aeruginosa (strain ATCC 15692 / DSM 22644 / CIP 104116 / JCM 14847 / LMG 12228 / 1C / PRS 101 / PAO1).